We begin with the raw amino-acid sequence, 251 residues long: DNA repair protein RecO (251 aa).

It belongs to the RecO family.

In terms of biological role, involved in DNA repair and RecF pathway recombination. In Lactococcus lactis subsp. cremoris (strain MG1363), this protein is DNA repair protein RecO.